The following is a 420-amino-acid chain: Fasciclin-like arabinogalactan protein 4 (420 aa).

An N-terminal signal peptide occupies residues 1-28; sequence MANVISISHFTLLALPYLLLLLSSTAAA. 2 consecutive FAS1 domains span residues 29–177 and 205–351; these read INVT…DSLI and GINL…SKVL. N-linked (GlcNAc...) asparagine glycosylation is found at Asn30, Asn40, Asn135, Asn154, Asn167, Asn207, Asn312, and Asn317. The tract at residues 360 to 388 is disordered; it reads SGQPVATAPPQEISLSPESSSEQPSRLVS. Over residues 368 to 384 the composition is skewed to low complexity; sequence PPQEISLSPESSSEQPS. Ser396 is lipidated: GPI-anchor amidated serine. A propeptide spans 397–420 (removed in mature form); the sequence is GAVKRPLGFLVLWCWCIAFCYVLV.

This sequence belongs to the fasciclin-like AGP family. Expressed in all plant organs and tissues, including guard cells in the leaf.

The protein localises to the cell membrane. Its function is as follows. May be a cell surface adhesion protein that is required for normal cell expansion. This chain is Fasciclin-like arabinogalactan protein 4 (FLA4), found in Arabidopsis thaliana (Mouse-ear cress).